Consider the following 46-residue polypeptide: Small polypeptide DEVIL 5 (46 aa).

The helical transmembrane segment at Val8–Val24 threads the bilayer. Residues Met15–Asp46 are required for DVL/RTFL small polypeptide activity.

It belongs to the DVL/RTFL small polypeptides family. Mostly expressed in roots and flowers, and, to a lower extent, in leaves and stems.

Its subcellular location is the cell membrane. Small polypeptide acting as a regulatory molecule which coordinates cellular responses required for differentiation, growth and development, including leaves shape, pedicule elongation, inflorescence organization and fruit maturation, probably by restricting polar cell proliferation in lateral organs and coordinating socket cell recruitment and differentiation at trichome sites. In Arabidopsis thaliana (Mouse-ear cress), this protein is Small polypeptide DEVIL 5.